A 212-amino-acid polypeptide reads, in one-letter code: Uracil phosphoribosyltransferase (212 aa).

5-phospho-alpha-D-ribose 1-diphosphate contacts are provided by residues R78, R103, and 130–138; that span reads DPMLATGGS. Uracil-binding positions include I193 and 198 to 200; that span reads GDA. Residue D199 coordinates 5-phospho-alpha-D-ribose 1-diphosphate.

This sequence belongs to the UPRTase family. Mg(2+) is required as a cofactor.

The catalysed reaction is UMP + diphosphate = 5-phospho-alpha-D-ribose 1-diphosphate + uracil. It functions in the pathway pyrimidine metabolism; UMP biosynthesis via salvage pathway; UMP from uracil: step 1/1. With respect to regulation, allosterically activated by GTP. In terms of biological role, catalyzes the conversion of uracil and 5-phospho-alpha-D-ribose 1-diphosphate (PRPP) to UMP and diphosphate. This chain is Uracil phosphoribosyltransferase, found in Stutzerimonas stutzeri (strain A1501) (Pseudomonas stutzeri).